A 264-amino-acid polypeptide reads, in one-letter code: 5'-nucleotidase SurE (264 aa).

4 residues coordinate a divalent metal cation: aspartate 10, aspartate 11, serine 43, and asparagine 99.

Belongs to the SurE nucleotidase family. Requires a divalent metal cation as cofactor.

Its subcellular location is the cytoplasm. The enzyme catalyses a ribonucleoside 5'-phosphate + H2O = a ribonucleoside + phosphate. Functionally, nucleotidase that shows phosphatase activity on nucleoside 5'-monophosphates. This is 5'-nucleotidase SurE from Methanococcus vannielii (strain ATCC 35089 / DSM 1224 / JCM 13029 / OCM 148 / SB).